The primary structure comprises 285 residues: Casein kinase II subunit beta-2 (285 aa).

The tract at residues 226-285 is disordered; it reads FKDAEDEAELDDDDEEEEEEEEEEEELAAMDEAEGAQQQHAAAAAGTATGGVAAGGEGVH. Positions 229–259 are enriched in acidic residues; that stretch reads AEDEAELDDDDEEEEEEEEEEEELAAMDEAE. Low complexity predominate over residues 260–272; it reads GAQQQHAAAAAGT. Over residues 273–285 the composition is skewed to gly residues; that stretch reads ATGGVAAGGEGVH.

This sequence belongs to the casein kinase 2 subunit beta family. As to quaternary structure, tetramer composed of two alpha chains, one beta chain and one beta' chain. Phosphorylated by alpha subunit.

In terms of biological role, regulatory subunit of casein kinase II/CK2. As part of the kinase complex regulates the basal catalytic activity of the alpha subunit a constitutively active serine/threonine-protein kinase that phosphorylates a large number of substrates containing acidic residues C-terminal to the phosphorylated serine or threonine. The sequence is that of Casein kinase II subunit beta-2 (ckb-2) from Neurospora crassa (strain ATCC 24698 / 74-OR23-1A / CBS 708.71 / DSM 1257 / FGSC 987).